The primary structure comprises 195 residues: Flavin prenyltransferase UbiX (195 aa).

FMN contacts are provided by residues 17–19 (GGS), serine 43, 94–97 (SAGT), and arginine 129. 2 residues coordinate dimethylallyl phosphate: tyrosine 159 and arginine 175.

It belongs to the UbiX/PAD1 family.

The enzyme catalyses dimethylallyl phosphate + FMNH2 = prenylated FMNH2 + phosphate. In terms of biological role, flavin prenyltransferase that catalyzes the synthesis of the prenylated FMN cofactor (prenyl-FMN) for 4-hydroxy-3-polyprenylbenzoic acid decarboxylase UbiD. The prenyltransferase is metal-independent and links a dimethylallyl moiety from dimethylallyl monophosphate (DMAP) to the flavin N5 and C6 atoms of FMN. The polypeptide is Flavin prenyltransferase UbiX (Deinococcus radiodurans (strain ATCC 13939 / DSM 20539 / JCM 16871 / CCUG 27074 / LMG 4051 / NBRC 15346 / NCIMB 9279 / VKM B-1422 / R1)).